A 944-amino-acid chain; its full sequence is Protein unc-45 homolog A (944 aa).

The segment at 1–25 is disordered; that stretch reads MTVSGPETPEPRPSDPGASSAEQLR. 3 TPR repeats span residues 21–54, 58–91, and 92–125; these read AEQL…GATP, AILH…DGGD, and VKAL…EPKN. Lys-70 carries the post-translational modification N6-acetyllysine. Lys-483 is modified (N6-acetyllysine).

Interacts with PGR isoforms A and B as well as with NR3C1 in the absence of ligand, and with HSP90AB1. Binding to HSP90AB1 involves 2 UNC45A monomers per HSP90AB1 dimer. Detected in spleen, bone marrow, lung and ovary, and at lower levels in testis, kidney, heart and brain (at protein level). Ubiquitous. Detected in uterus, large intestine, kidney, spleen, lung, brain, liver and ovary.

It localises to the cytoplasm. The protein localises to the perinuclear region. It is found in the nucleus. May act as co-chaperone for HSP90 (Potential). Prevents the stimulation of HSP90AB1 ATPase activity by AHSA1. Positive factor in promoting PGR function in the cell. May be necessary for proper folding of myosin (Potential). Necessary for normal cell proliferation. Necessary for normal myotube formation and myosin accumulation during muscle cell development. May play a role in erythropoiesis in stroma cells in the spleen. This Mus musculus (Mouse) protein is Protein unc-45 homolog A (Unc45a).